Reading from the N-terminus, the 195-residue chain is uncharacterized protein (195 aa).

2 helical membrane-spanning segments follow: residues 13-32 (VIGLWLPILVILILFAFLVA) and 42-64 (LSNSVVALATAIMASAALVTILV).

It localises to the cell membrane. This is an uncharacterized protein from Archaeoglobus fulgidus (strain ATCC 49558 / DSM 4304 / JCM 9628 / NBRC 100126 / VC-16).